A 342-amino-acid chain; its full sequence is Polycomb group RING finger protein 2 (342 aa).

Residues 18–57 (CALCGGYFIDATTIVECLHSFCKTCIVRYLETNKYCPMCD) form an RING-type zinc finger. Glycyl lysine isopeptide (Lys-Gly) (interchain with G-Cter in SUMO2) cross-links involve residues lysine 51 and lysine 88. Residues 81-95 (KLVPGLFKDEMKRRR) carry the Nuclear localization signal motif. Phosphothreonine; by PKA is present on threonine 237. The tract at residues 237-342 (TLPTVPTPSE…MTVNGAPCPP (106 aa)) is disordered. Residues 243–253 (TPSEGTNTSGA) show a composition bias toward polar residues. The span at 263 to 318 (APSPATLPATSSSLPSPATPSHGSPSSHGPPATHPTSPTPPSTAAGTTTATNGGTS) shows a compositional bias: low complexity. The segment covering 319–328 (NCLQTPSSTS) has biased composition (polar residues). Threonine 334 is subject to Phosphothreonine; by PKA.

As to quaternary structure, exists as both a monomer and homodimer. Component of a PRC1-like complex. Interacts with CBX8, RING1 and RNF2. Interacts with CBX7. Interacts with PHC2. Phosphorylated. Homodimer formation is regulated by phosphorylation with only unphosphorylated proteins forming homodimers. As to expression, expressed in embryonic stem cells. Expressed in a variety of tumor cells and in neural tissues.

The protein resides in the nucleus. Its function is as follows. Transcriptional repressor. Binds specifically to the DNA sequence 5'-GACTNGACT-3'. Has tumor suppressor activity. May play a role in control of cell proliferation and/or neural cell development. Regulates proliferation of early T progenitor cells by maintaining expression of HES1. Also plays a role in antero-posterior specification of the axial skeleton and negative regulation of the self-renewal activity of hematopoietic stem cells. Component of a Polycomb group (PcG) multiprotein PRC1-like complex, a complex class required to maintain the transcriptionally repressive state of many genes, including Hox genes, throughout development. PcG PRC1 complex acts via chromatin remodeling and modification of histones; it mediates monoubiquitination of histone H2A 'Lys-119', rendering chromatin heritably changed in its expressibility. Within the PRC1-like complex, regulates RNF2 ubiquitin ligase activity. This Mus musculus (Mouse) protein is Polycomb group RING finger protein 2 (Pcgf2).